The following is a 333-amino-acid chain: Ornithine carbamoyltransferase (333 aa).

Carbamoyl phosphate contacts are provided by residues 56–59 (STRT), Q83, R107, and 134–137 (HPTQ). L-ornithine-binding positions include N167, D231, and 235 to 236 (SM). Carbamoyl phosphate is bound by residues 273-274 (CL) and R318.

This sequence belongs to the aspartate/ornithine carbamoyltransferase superfamily. OTCase family.

Its subcellular location is the cytoplasm. It catalyses the reaction carbamoyl phosphate + L-ornithine = L-citrulline + phosphate + H(+). It functions in the pathway amino-acid biosynthesis; L-arginine biosynthesis; L-arginine from L-ornithine and carbamoyl phosphate: step 1/3. In terms of biological role, reversibly catalyzes the transfer of the carbamoyl group from carbamoyl phosphate (CP) to the N(epsilon) atom of ornithine (ORN) to produce L-citrulline. This is Ornithine carbamoyltransferase (argF) from Staphylococcus aureus (strain COL).